A 409-amino-acid polypeptide reads, in one-letter code: Menaquinone reductase (409 aa).

Residues 11–15 (GAGPA), 44–47 (CGDG), R101, V125, D288, and 300–301 (GI) each bind FAD.

This sequence belongs to the geranylgeranyl reductase family. It depends on FAD as a cofactor.

The enzyme catalyses menaquinone-9 + AH2 = beta-dihydromenaquinone-9 + A. It functions in the pathway quinol/quinone metabolism; menaquinone biosynthesis. Functionally, catalyzes the reduction of a single double bond in the isoprenoid tail of menaquinone (MK-9) in M.smegmatis, likely the beta-isoprene unit, forming the predominant form of menaquinone found in mycobacteria, MK-9(II-H2). This Mycolicibacterium smegmatis (strain ATCC 700084 / mc(2)155) (Mycobacterium smegmatis) protein is Menaquinone reductase.